A 138-amino-acid chain; its full sequence is Small ribosomal subunit protein bS6 (138 aa).

A disordered region spans residues 100–138 (SPLAKGREEDDSDSSARRARDDSDDDGDDDEDDRRASAD). Over residues 121 to 131 (DSDDDGDDDED) the composition is skewed to acidic residues.

This sequence belongs to the bacterial ribosomal protein bS6 family.

Its function is as follows. Binds together with bS18 to 16S ribosomal RNA. The protein is Small ribosomal subunit protein bS6 of Thioalkalivibrio sulfidiphilus (strain HL-EbGR7).